The primary structure comprises 437 residues: Glutamyl-tRNA reductase (437 aa).

Residues 49–52, Ser109, 114–116, and Gln120 each bind substrate; these read TCNR and EGQ. Cys50 functions as the Nucleophile in the catalytic mechanism. 198–203 is a binding site for NADP(+); it reads GAGRMS.

It belongs to the glutamyl-tRNA reductase family. As to quaternary structure, homodimer.

It carries out the reaction (S)-4-amino-5-oxopentanoate + tRNA(Glu) + NADP(+) = L-glutamyl-tRNA(Glu) + NADPH + H(+). It participates in porphyrin-containing compound metabolism; protoporphyrin-IX biosynthesis; 5-aminolevulinate from L-glutamyl-tRNA(Glu): step 1/2. It functions in the pathway porphyrin-containing compound metabolism; chlorophyll biosynthesis. In terms of biological role, catalyzes the NADPH-dependent reduction of glutamyl-tRNA(Glu) to glutamate 1-semialdehyde (GSA). The protein is Glutamyl-tRNA reductase of Prochlorococcus marinus (strain SARG / CCMP1375 / SS120).